Here is a 354-residue protein sequence, read N- to C-terminus: Heat-inducible transcription repressor HrcA (354 aa).

Belongs to the HrcA family.

In terms of biological role, negative regulator of class I heat shock genes (grpE-dnaK-dnaJ and groELS operons). Prevents heat-shock induction of these operons. This chain is Heat-inducible transcription repressor HrcA, found in Novosphingobium aromaticivorans (strain ATCC 700278 / DSM 12444 / CCUG 56034 / CIP 105152 / NBRC 16084 / F199).